The following is a 91-amino-acid chain: Small ribosomal subunit protein uS15 (91 aa).

It belongs to the universal ribosomal protein uS15 family. Part of the 30S ribosomal subunit. Forms a bridge to the 50S subunit in the 70S ribosome, contacting the 23S rRNA.

In terms of biological role, one of the primary rRNA binding proteins, it binds directly to 16S rRNA where it helps nucleate assembly of the platform of the 30S subunit by binding and bridging several RNA helices of the 16S rRNA. Its function is as follows. Forms an intersubunit bridge (bridge B4) with the 23S rRNA of the 50S subunit in the ribosome. This is Small ribosomal subunit protein uS15 from Sulfurimonas denitrificans (strain ATCC 33889 / DSM 1251) (Thiomicrospira denitrificans (strain ATCC 33889 / DSM 1251)).